Here is a 349-residue protein sequence, read N- to C-terminus: Isopentenyl-diphosphate delta-isomerase (349 aa).

5-6 (RK) is a binding site for substrate. FMN is bound by residues S62, 63 to 65 (AIT), S93, and N122. 93 to 95 (SQR) is a binding site for substrate. Residue Q151 coordinates substrate. Residue E152 participates in Mg(2+) binding. Residues K183, T213, 259-261 (GIR), and 280-281 (AL) contribute to the FMN site.

It belongs to the IPP isomerase type 2 family. Homooctamer. Dimer of tetramers. Requires FMN as cofactor. NADPH serves as cofactor. It depends on Mg(2+) as a cofactor.

Its subcellular location is the cytoplasm. It catalyses the reaction isopentenyl diphosphate = dimethylallyl diphosphate. Involved in the biosynthesis of isoprenoids. Catalyzes the 1,3-allylic rearrangement of the homoallylic substrate isopentenyl (IPP) to its allylic isomer, dimethylallyl diphosphate (DMAPP). This is Isopentenyl-diphosphate delta-isomerase from Methanothermobacter thermautotrophicus (strain ATCC 29096 / DSM 1053 / JCM 10044 / NBRC 100330 / Delta H) (Methanobacterium thermoautotrophicum).